The following is a 603-amino-acid chain: DNA mismatch repair protein MutL (603 aa).

The protein belongs to the DNA mismatch repair MutL/HexB family.

This protein is involved in the repair of mismatches in DNA. It is required for dam-dependent methyl-directed DNA mismatch repair. May act as a 'molecular matchmaker', a protein that promotes the formation of a stable complex between two or more DNA-binding proteins in an ATP-dependent manner without itself being part of a final effector complex. The sequence is that of DNA mismatch repair protein MutL from Bradyrhizobium diazoefficiens (strain JCM 10833 / BCRC 13528 / IAM 13628 / NBRC 14792 / USDA 110).